We begin with the raw amino-acid sequence, 215 residues long: Ectodysplasin-A receptor-associated adapter protein (215 aa).

2 disordered regions span residues 1-41 (MGLR…FNMS) and 62-86 (LNCP…TGDP). The span at 17 to 28 (GHQEDHMVKEPV) shows a compositional bias: basic and acidic residues. The Death domain occupies 123–202 (DVIRIKLDPC…KVLRRWVDEE (80 aa)).

Self-associates and binds EDAR, TRAF1, TRAF2 and TRAF3. Detected in adult pancreas, placenta and fetal skin, and at lower levels in lung, thymus, prostate and testis.

It is found in the cytoplasm. In terms of biological role, adapter protein that interacts with EDAR DEATH domain and couples the receptor to EDA signaling pathway during morphogenesis of ectodermal organs. Mediates the activation of NF-kappa-B. This Homo sapiens (Human) protein is Ectodysplasin-A receptor-associated adapter protein (EDARADD).